The sequence spans 312 residues: Glycine--tRNA ligase alpha subunit (312 aa).

This sequence belongs to the class-II aminoacyl-tRNA synthetase family. In terms of assembly, tetramer of two alpha and two beta subunits.

The protein localises to the cytoplasm. It carries out the reaction tRNA(Gly) + glycine + ATP = glycyl-tRNA(Gly) + AMP + diphosphate. This Thiobacillus denitrificans (strain ATCC 25259 / T1) protein is Glycine--tRNA ligase alpha subunit.